We begin with the raw amino-acid sequence, 913 residues long: ER degradation-enhancing alpha-mannosidase-like protein 3 (913 aa).

The N-terminal stretch at 1–15 (MGCPAVEARRWGDMW) is a signal peptide. N-linked (GlcNAc...) asparagine glycosylation is present at N104. The active-site Proton donor is E132. A glycan (N-linked (GlcNAc...) asparagine) is linked at N181. The active site involves D279. E373 acts as the Proton donor in catalysis. E391 is a catalytic residue. Position 477 (T477) interacts with Ca(2+). N-linked (GlcNAc...) asparagine glycosylation occurs at N497. The PA domain occupies 660–766 (LSKHLAGAQG…KEGNIILDAI (107 aa)). A glycan (N-linked (GlcNAc...) asparagine) is linked at N797. The interval 823 to 895 (EESPVSQPEV…NKVQPMESIL (73 aa)) is disordered. Residues 826-839 (PVSQPEVPSSDSPS) show a composition bias toward low complexity. The segment covering 843-866 (RTSERDITPESQEHKTEETEHSPK) has biased composition (basic and acidic residues). The Prevents secretion from ER signature appears at 910–913 (KDEL).

The protein belongs to the glycosyl hydrolase 47 family. The cofactor is Ca(2+).

It is found in the endoplasmic reticulum lumen. The catalysed reaction is N(4)-(alpha-D-Man-(1-&gt;2)-alpha-D-Man-(1-&gt;2)-alpha-D-Man-(1-&gt;3)-[alpha-D-Man-(1-&gt;2)-alpha-D-Man-(1-&gt;3)-[alpha-D-Man-(1-&gt;2)-alpha-D-Man-(1-&gt;6)]-alpha-D-Man-(1-&gt;6)]-beta-D-Man-(1-&gt;4)-beta-D-GlcNAc-(1-&gt;4)-beta-D-GlcNAc)-L-asparaginyl-[protein] (N-glucan mannose isomer 9A1,2,3B1,2,3) + 4 H2O = N(4)-(alpha-D-Man-(1-&gt;3)-[alpha-D-Man-(1-&gt;3)-[alpha-D-Man-(1-&gt;6)]-alpha-D-Man-(1-&gt;6)]-beta-D-Man-(1-&gt;4)-beta-D-GlcNAc-(1-&gt;4)-beta-D-GlcNAc)-L-asparaginyl-[protein] (N-glucan mannose isomer 5A1,2) + 4 beta-D-mannose. It carries out the reaction N(4)-(alpha-D-Man-(1-&gt;2)-alpha-D-Man-(1-&gt;2)-alpha-D-Man-(1-&gt;3)-[alpha-D-Man-(1-&gt;3)-[alpha-D-Man-(1-&gt;2)-alpha-D-Man-(1-&gt;6)]-alpha-D-Man-(1-&gt;6)]-beta-D-Man-(1-&gt;4)-beta-D-GlcNAc-(1-&gt;4)-beta-D-GlcNAc)-L-asparaginyl-[protein] (N-glucan mannose isomer 8A1,2,3B1,3) + 3 H2O = N(4)-(alpha-D-Man-(1-&gt;3)-[alpha-D-Man-(1-&gt;3)-[alpha-D-Man-(1-&gt;6)]-alpha-D-Man-(1-&gt;6)]-beta-D-Man-(1-&gt;4)-beta-D-GlcNAc-(1-&gt;4)-beta-D-GlcNAc)-L-asparaginyl-[protein] (N-glucan mannose isomer 5A1,2) + 3 beta-D-mannose. It functions in the pathway protein modification; protein glycosylation. In terms of biological role, may be involved in endoplasmic reticulum-associated degradation (ERAD). The polypeptide is ER degradation-enhancing alpha-mannosidase-like protein 3 (edem3) (Xenopus laevis (African clawed frog)).